The primary structure comprises 504 residues: One cut domain family member 2 (504 aa).

Disordered regions lie at residues 29 to 95 (LGTL…GTAA), 166 to 189 (KFHH…RLSG), 274 to 332 (EQHL…QLEE), and 485 to 504 (WQDD…CTKA). A compositionally biased stretch (gly residues) spans 35–56 (PAGGGSGGGGGGGGGGGGGGPG). The segment covering 168–186 (HHPHPHHHPHHHHHHHHQR) has biased composition (basic residues). Positions 324–410 (VATSGQLEEI…QRMSALRLAA (87 aa)) form a DNA-binding region, CUT. Residues 426–485 (QKKSRLVFTDLQRRTLFAIFKENKRPSKEMQITISQQLGLELTTVSNFFMNARRRSLEKW) constitute a DNA-binding region (homeobox). Residues 490–504 (STGGSSSTSSTCTKA) are compositionally biased toward low complexity.

This sequence belongs to the CUT homeobox family.

The protein resides in the nucleus. Functionally, transcriptional activator. Activates the transcription of a number of liver genes such as HNF3B. In Homo sapiens (Human), this protein is One cut domain family member 2 (ONECUT2).